The chain runs to 593 residues: Tyrosine-protein phosphatase non-receptor type 11 (593 aa).

SH2 domains lie at 6–102 and 112–216; these read WFHP…KYPL and WFHG…KQPL. The Tyrosine-protein phosphatase domain occupies 247–521; that stretch reads FWEEFETLQQ…RFIYMAVQHY (275 aa). Residues Asp425, 459 to 465, and Gln506 each bind substrate; that span reads CSAGIGR. The active-site Phosphocysteine intermediate is Cys459. Polar residues predominate over residues 548–557; it reads SLSDQTSGDQ. Positions 548–575 are disordered; sequence SLSDQTSGDQSPLPPCTPTPTCPEMRED. The segment covering 559–568 has biased composition (pro residues); it reads PLPPCTPTPT.

It belongs to the protein-tyrosine phosphatase family. Non-receptor class 2 subfamily. Post-translationally, phosphorylated by tyrosine-protein kinases. In terms of tissue distribution, expressed in embryonic fibroblast, hematopoietic, erythroid, myeloid and lymphoid cells.

The protein resides in the cytoplasm. It catalyses the reaction O-phospho-L-tyrosyl-[protein] + H2O = L-tyrosyl-[protein] + phosphate. In terms of biological role, this PTPase activity may directly link growth factor receptors and other signaling proteins through protein-tyrosine phosphorylation. The SH2 regions may interact with other cellular components to modulate its own phosphatase activity against interacting substrates. May play a positive role during the stages of erythroid cell proliferation. The chain is Tyrosine-protein phosphatase non-receptor type 11 (PTPN11) from Gallus gallus (Chicken).